A 659-amino-acid chain; its full sequence is Serine/threonine-protein kinase StkP (659 aa).

Residues methionine 1 to lysine 342 are Cytoplasmic-facing. A Protein kinase domain is found at tyrosine 12 to leucine 273. ATP-binding positions include isoleucine 18–valine 26 and lysine 42. Aspartate 136 serves as the catalytic Proton acceptor. The chain crosses the membrane as a helical span at residues methionine 343 to leucine 363. Residues serine 364–proline 659 are Periplasmic-facing. 4 PASTA domains span residues serine 366 to serine 433, glycine 434 to lysine 505, lysine 506 to lysine 577, and lysine 578 to lysine 651. Positions glutamate 541–threonine 561 are disordered.

This sequence belongs to the protein kinase superfamily. Ser/Thr protein kinase family. Homodimer. StkP forms dimers through its transmembrane and extracellular domains. Dimer formation likely promotes autophosphorylation activity and might be necessary for targeting StkP substrate. Interacts with PhpP via its kinase domain. In terms of processing, autophosphorylation occurs predominantly on threonine residue(s) and weakly on serine residue(s). Dephosphorylated by PhpP.

It is found in the cell membrane. It catalyses the reaction L-seryl-[protein] + ATP = O-phospho-L-seryl-[protein] + ADP + H(+). The enzyme catalyses L-threonyl-[protein] + ATP = O-phospho-L-threonyl-[protein] + ADP + H(+). StkP is activated continuously during growth and its activity is inhibited upon growth arrest. Inhibited by staurosporine, a known protein kinase inhibitor. Functionally, protein kinase involved in signal transduction pathways that regulate various cellular processes. Likely senses intracellular peptidoglycan subunits present in the cell division septa of actively growing cells; thus, intracellular unlinked peptidoglycan may serve as the signal molecules that trigger StkP phosphorylation activity on a set of substrates. Plays a crucial role in the regulation of cell shape and cell division of S.pneumoniae through control of at least DivIVA activity. Is involved in competence triggering, via the transduction of signals culminating directly or indirectly in ComD activation. Is important for the resistance of S.pneumoniae to various environmental stress conditions. Appears to be a global regulator that positively controls the transcription of a set of genes encoding functions involved in cell wall metabolism, pyrimidine biosynthesis, DNA repair, iron uptake, and oxidative stress response, and that seems to down-regulate genes employed in competence. Since StkP is unlikely to directly regulate transcription, the input signal must be transmitted through an effector molecule. Identified target substrates that are specifically phosphorylated by StkP in vivo, mainly on threonine residues, are DivIVA, GlmM, PpaC, MapZ, KhpB (also called EloR/Jag) and StkP itself. Autophosphorylated StkP is a substrate for the cotranscribed protein phosphatase PhpP; PhpP and StkP appear to constitute a functional signaling couple in vivo. The polypeptide is Serine/threonine-protein kinase StkP (stkP) (Streptococcus pneumoniae).